A 609-amino-acid polypeptide reads, in one-letter code: Aspartate--tRNA(Asp/Asn) ligase (609 aa).

An L-aspartate-binding site is contributed by glutamate 177. The aspartate stretch occupies residues 201–204; the sequence is QLFK. Residue arginine 223 participates in L-aspartate binding. ATP-binding positions include 223-225 and glutamine 232; that span reads RDE. Histidine 461 contacts L-aspartate. Residue glutamate 499 coordinates ATP. Arginine 506 is an L-aspartate binding site. 551-554 contributes to the ATP binding site; sequence GVDR.

Belongs to the class-II aminoacyl-tRNA synthetase family. Type 1 subfamily. As to quaternary structure, homodimer.

Its subcellular location is the cytoplasm. The enzyme catalyses tRNA(Asx) + L-aspartate + ATP = L-aspartyl-tRNA(Asx) + AMP + diphosphate. Its function is as follows. Aspartyl-tRNA synthetase with relaxed tRNA specificity since it is able to aspartylate not only its cognate tRNA(Asp) but also tRNA(Asn). Reaction proceeds in two steps: L-aspartate is first activated by ATP to form Asp-AMP and then transferred to the acceptor end of tRNA(Asp/Asn). The chain is Aspartate--tRNA(Asp/Asn) ligase from Synechococcus sp. (strain CC9605).